The chain runs to 68 residues: Large ribosomal subunit protein uL29 (68 aa).

The protein belongs to the universal ribosomal protein uL29 family.

The polypeptide is Large ribosomal subunit protein uL29 (Albidiferax ferrireducens (strain ATCC BAA-621 / DSM 15236 / T118) (Rhodoferax ferrireducens)).